The chain runs to 658 residues: Probable replication factor A 73 kDa subunit (658 aa).

Disordered regions lie at residues 134–155 (PEVKPRSHSGNPAEHHGYRPNI) and 169–222 (SEFQ…TERG). The OB DNA-binding region spans 236 to 326 (FRIHGMVSRK…TLRNDSVVEA (91 aa)). The C4-type zinc-finger motif lies at 518–539 (CASEGCQKKVIESDGEYRCEKC).

This sequence belongs to the replication factor A protein 1 family. In terms of assembly, component of the heterotrimeric canonical replication protein A complex (RPA).

The protein resides in the nucleus. As part of the heterotrimeric replication protein A complex (RPA/RP-A), binds and stabilizes single-stranded DNA intermediates, that form during DNA replication or upon DNA stress. It prevents their reannealing and in parallel, recruits and activates different proteins and complexes involved in DNA metabolism. Thereby, it plays an essential role both in DNA replication and the cellular response to DNA damage. The chain is Probable replication factor A 73 kDa subunit from Caenorhabditis briggsae.